Reading from the N-terminus, the 379-residue chain is UDP-4-amino-4-deoxy-L-arabinose--oxoglutarate aminotransferase (379 aa).

K182 is subject to N6-(pyridoxal phosphate)lysine.

Belongs to the DegT/DnrJ/EryC1 family. ArnB subfamily. Homodimer. Pyridoxal 5'-phosphate is required as a cofactor.

It carries out the reaction UDP-4-amino-4-deoxy-beta-L-arabinose + 2-oxoglutarate = UDP-beta-L-threo-pentopyranos-4-ulose + L-glutamate. It participates in nucleotide-sugar biosynthesis; UDP-4-deoxy-4-formamido-beta-L-arabinose biosynthesis; UDP-4-deoxy-4-formamido-beta-L-arabinose from UDP-alpha-D-glucuronate: step 2/3. It functions in the pathway bacterial outer membrane biogenesis; lipopolysaccharide biosynthesis. In terms of biological role, catalyzes the conversion of UDP-4-keto-arabinose (UDP-Ara4O) to UDP-4-amino-4-deoxy-L-arabinose (UDP-L-Ara4N). The modified arabinose is attached to lipid A and is required for resistance to polymyxin and cationic antimicrobial peptides. The polypeptide is UDP-4-amino-4-deoxy-L-arabinose--oxoglutarate aminotransferase (Escherichia coli O81 (strain ED1a)).